We begin with the raw amino-acid sequence, 195 residues long: Holliday junction branch migration complex subunit RuvA (195 aa).

Residues 1 to 66 (MNYLIFKVIY…LIIKDLYGFR (66 aa)) are domain I. A domain II region spans residues 67 to 141 (TYNERLLFID…KYINKVNDKN (75 aa)). A region of interest (flexible linker) is located at residue Asn141. The segment at 141-195 (NNWAKELSIGLENLGYTKKDIEYAITKVKINSQQDIDISEIISSAIKEISLRHEN) is domain III.

This sequence belongs to the RuvA family. As to quaternary structure, homotetramer. Forms an RuvA(8)-RuvB(12)-Holliday junction (HJ) complex. HJ DNA is sandwiched between 2 RuvA tetramers; dsDNA enters through RuvA and exits via RuvB. An RuvB hexamer assembles on each DNA strand where it exits the tetramer. Each RuvB hexamer is contacted by two RuvA subunits (via domain III) on 2 adjacent RuvB subunits; this complex drives branch migration. In the full resolvosome a probable DNA-RuvA(4)-RuvB(12)-RuvC(2) complex forms which resolves the HJ.

The protein resides in the cytoplasm. Its function is as follows. The RuvA-RuvB-RuvC complex processes Holliday junction (HJ) DNA during genetic recombination and DNA repair, while the RuvA-RuvB complex plays an important role in the rescue of blocked DNA replication forks via replication fork reversal (RFR). RuvA specifically binds to HJ cruciform DNA, conferring on it an open structure. The RuvB hexamer acts as an ATP-dependent pump, pulling dsDNA into and through the RuvAB complex. HJ branch migration allows RuvC to scan DNA until it finds its consensus sequence, where it cleaves and resolves the cruciform DNA. The chain is Holliday junction branch migration complex subunit RuvA from Ureaplasma parvum serovar 3 (strain ATCC 27815 / 27 / NCTC 11736).